Consider the following 105-residue polypeptide: Guanidinium exporter (105 aa).

The helical transmembrane segment at methionine 1–lysine 21 threads the bilayer. The Cytoplasmic segment spans residues tyrosine 22–arginine 28. Residues leucine 29–alanine 49 traverse the membrane as a helical segment. The Periplasmic portion of the chain corresponds to methionine 50–threonine 57. Residues alanine 58–leucine 78 form a helical membrane-spanning segment. The Cytoplasmic segment spans residues glycine 79–serine 81. A helical transmembrane segment spans residues alanine 82 to leucine 102. The Periplasmic portion of the chain corresponds to serine 103 to histidine 105.

This sequence belongs to the drug/metabolite transporter (DMT) superfamily. Small multidrug resistance (SMR) (TC 2.A.7.1) family. Gdx/SugE subfamily.

It localises to the cell inner membrane. Its function is as follows. Guanidinium ion exporter. Couples guanidinium export to the proton motive force, exchanging one guanidinium ion for two protons. In Escherichia coli O157:H7, this protein is Guanidinium exporter.